The chain runs to 337 residues: Transmembrane protein 120B (337 aa).

Residues 1–39 adopt a coiled-coil conformation; that stretch reads MSLERCQSEWTEIEQEYQQLQETHKVYRQKLEELTNLQA. 6 helical membrane-spanning segments follow: residues 100 to 122, 130 to 150, 157 to 175, 185 to 205, 268 to 288, and 300 to 320; these read GLYL…AKFA, FKLY…FLLN, IFNF…RESI, GWWV…LTWP, FLLP…VTLF, and QVFM…LTTL.

It belongs to the TMEM120 family.

Its subcellular location is the nucleus inner membrane. Its function is as follows. Necessary for efficient adipogenesis. Does not show ion channel activity. This chain is Transmembrane protein 120B (tmem120b), found in Danio rerio (Zebrafish).